The sequence spans 222 residues: Uridine diphosphate glucose pyrophosphatase NUDT14 (222 aa).

In terms of domain architecture, Nudix hydrolase spans 38–206 (KTHDSVTVLL…DIPKTLGVIF (169 aa)). A Nudix box motif is present at residues 111 to 129 (PGLSLEEVACKEAWEECGY).

It belongs to the Nudix hydrolase family. In terms of assembly, homodimer. Mg(2+) serves as cofactor.

The protein localises to the cytoplasm. It carries out the reaction UDP-sugar + H2O = UMP + alpha-D-aldose 1-phosphate.. Functionally, hydrolyzes UDP-glucose to glucose 1-phosphate and UMP and ADP-ribose to ribose 5-phosphate and AMP. The physiological substrate is probably UDP-glucose. Poor activity on other substrates such as ADP-glucose, CDP-glucose, GDP-glucose and GDP-mannose. This chain is Uridine diphosphate glucose pyrophosphatase NUDT14 (NUDT14), found in Homo sapiens (Human).